A 433-amino-acid polypeptide reads, in one-letter code: Delta-aminolevulinic acid dehydratase, chloroplastic (433 aa).

The N-terminal 56 residues, Met-1 to Ala-56, are a transit peptide targeting the chloroplast. The interval Asn-83–Asn-115 is disordered. A compositionally biased stretch (pro residues) spans Ser-86–Lys-95. The Schiff-base intermediate with substrate role is filled by Lys-301. 5-aminolevulinate-binding residues include Arg-311 and Lys-323. Mg(2+) is bound at residue Glu-339. The active-site Schiff-base intermediate with substrate is Lys-354. 2 residues coordinate 5-aminolevulinate: Ser-380 and Tyr-419.

The protein belongs to the ALAD family. In terms of assembly, homooctamer. It depends on Mg(2+) as a cofactor.

It is found in the plastid. The protein localises to the chloroplast. The catalysed reaction is 2 5-aminolevulinate = porphobilinogen + 2 H2O + H(+). The protein operates within porphyrin-containing compound metabolism; protoporphyrin-IX biosynthesis; coproporphyrinogen-III from 5-aminolevulinate: step 1/4. Functionally, catalyzes an early step in the biosynthesis of tetrapyrroles. Binds two molecules of 5-aminolevulinate per subunit, each at a distinct site, and catalyzes their condensation to form porphobilinogen. In Spinacia oleracea (Spinach), this protein is Delta-aminolevulinic acid dehydratase, chloroplastic (HEMB).